Here is a 344-residue protein sequence, read N- to C-terminus: Large ribosomal subunit protein uL3 (344 aa).

This sequence belongs to the universal ribosomal protein uL3 family. In terms of assembly, part of the 50S ribosomal subunit. Forms a cluster with proteins L14 and L24e.

Its function is as follows. One of the primary rRNA binding proteins, it binds directly near the 3'-end of the 23S rRNA, where it nucleates assembly of the 50S subunit. This is Large ribosomal subunit protein uL3 from Aeropyrum pernix (strain ATCC 700893 / DSM 11879 / JCM 9820 / NBRC 100138 / K1).